Consider the following 260-residue polypeptide: Uridylate kinase (260 aa).

ATP is bound at residue 29 to 32 (KLSG). Residues 37-42 (GDLGYG) form an involved in allosteric activation by GTP region. Gly-71 lines the UMP pocket. 2 residues coordinate ATP: Gly-72 and Arg-76. Residues Asp-91 and 152-159 (SGNPFFTT) contribute to the UMP site. ATP is bound by residues Thr-179, Tyr-185, and Asp-188.

The protein belongs to the UMP kinase family. Homohexamer.

The protein resides in the cytoplasm. The enzyme catalyses UMP + ATP = UDP + ADP. It participates in pyrimidine metabolism; CTP biosynthesis via de novo pathway; UDP from UMP (UMPK route): step 1/1. Allosterically activated by GTP. Inhibited by UTP. In terms of biological role, catalyzes the reversible phosphorylation of UMP to UDP. This is Uridylate kinase from Synechocystis sp. (strain ATCC 27184 / PCC 6803 / Kazusa).